The chain runs to 354 residues: Annexin A13 (354 aa).

Annexin repeat units lie at residues 26–97 (NDPN…MLLT), 98–177 (DTDK…ALLQ), 203–275 (NLVE…LTLN), and 279–350 (NRPK…ALIG). Positions 39, 41, 43, 44, 46, 83, 111, 113, 115, 118, 163, 265, 292, 294, 295, 296, and 336 each coordinate Ca(2+).

The protein belongs to the annexin family. As to quaternary structure, homodimer.

Its subcellular location is the tegument. The protein resides in the secreted. The protein localises to the extracellular exosome. It localises to the host cell. In terms of biological role, involved in reproduction of the worm. Involved in host-parasite interaction. Delivered into the host cell by means of parasite exosomes. Binds to acidic phospholipid membranes in a calcium-dependent manner in vitro. Causes aggregation of liposomes in the presence of calcium, but not in its absence. Likely to promote membrane fusion. May provide structural integrity within the tegument. The chain is Annexin A13 from Schistosoma japonicum (Blood fluke).